The chain runs to 243 residues: Triosephosphate isomerase (243 aa).

Substrate is bound at residue Asn-9 to Lys-11. The active-site Electrophile is His-96. The Proton acceptor role is filled by Glu-165. Substrate contacts are provided by residues Gly-171, Ser-204, and Gly-225–Gly-226.

Belongs to the triosephosphate isomerase family. As to quaternary structure, homodimer.

It is found in the cytoplasm. It catalyses the reaction D-glyceraldehyde 3-phosphate = dihydroxyacetone phosphate. Its pathway is carbohydrate biosynthesis; gluconeogenesis. It functions in the pathway carbohydrate degradation; glycolysis; D-glyceraldehyde 3-phosphate from glycerone phosphate: step 1/1. Functionally, involved in the gluconeogenesis. Catalyzes stereospecifically the conversion of dihydroxyacetone phosphate (DHAP) to D-glyceraldehyde-3-phosphate (G3P). The sequence is that of Triosephosphate isomerase from Parasynechococcus marenigrum (strain WH8102).